A 79-amino-acid chain; its full sequence is Conotoxin VnMSGL-0122 (79 aa).

The first 20 residues, 1-20, serve as a signal peptide directing secretion; sequence MSGLGIMVLALLLLVFMATS. Residues 21–44 constitute a propeptide that is removed on maturation; that stretch reads HQDGGGKQATQRDAINVRRRRSIT. 3 disulfide bridges follow: Cys52–Cys64, Cys56–Cys73, and Cys63–Cys77. Position 78 is a leucine amide (Leu78).

This sequence belongs to the conotoxin O3 superfamily. Expressed by the venom duct.

The protein resides in the secreted. The sequence is that of Conotoxin VnMSGL-0122 from Conus ventricosus (Mediterranean cone).